We begin with the raw amino-acid sequence, 209 residues long: Small ribosomal subunit protein uS4 (209 aa).

Residues 98–161 (TRLDNVVYRM…AKQLRVQEAL (64 aa)) form the S4 RNA-binding domain.

Belongs to the universal ribosomal protein uS4 family. Part of the 30S ribosomal subunit. Contacts protein S5. The interaction surface between S4 and S5 is involved in control of translational fidelity.

In terms of biological role, one of the primary rRNA binding proteins, it binds directly to 16S rRNA where it nucleates assembly of the body of the 30S subunit. Functionally, with S5 and S12 plays an important role in translational accuracy. In Stenotrophomonas maltophilia (strain R551-3), this protein is Small ribosomal subunit protein uS4.